Here is a 211-residue protein sequence, read N- to C-terminus: Probable GTP-binding protein EngB (211 aa).

Positions 13-188 constitute an EngB-type G domain; sequence SGYEIAFAGR…ASVMAGRLHF (176 aa). Residues 21–28, 48–52, 67–70, 134–137, and 167–169 each bind GTP; these read GRSNAGKS, GRTQM, DLPG, TKAD, and FSS. Mg(2+)-binding residues include Ser-28 and Thr-50.

Belongs to the TRAFAC class TrmE-Era-EngA-EngB-Septin-like GTPase superfamily. EngB GTPase family. Requires Mg(2+) as cofactor.

Necessary for normal cell division and for the maintenance of normal septation. This Acinetobacter baumannii (strain ATCC 17978 / DSM 105126 / CIP 53.77 / LMG 1025 / NCDC KC755 / 5377) protein is Probable GTP-binding protein EngB.